A 965-amino-acid polypeptide reads, in one-letter code: MKPKNNKDKKSKFSYKETLNLLKTDFSMRANSVSREPQIQEFWLKNKIDLELGSSNLGEKFTLHDGPPYANGSLHMGHALNKVLKDIINKYKTLKGFKVHFVPGWDCHGLPIELKVLQSLKSHERKDLDSLGLRKKATDYAKIQIKNQLEGFKRWGIWGDWDNPYLTLKNNYESAQIGVFGKMFLNGYIYRGLKPVHWSPSSRTALAEAELEYPEEHYSSSVYVSLNISNLSDEILLKLEEKDLKNKLLSNLNKLFIAIWTTTPWTIPGNEAVAINPRINYVFAEDQNGDIFLFAKDLISEISEKLEREFNTLIDVKGSMLTGIEYKHPTKNKFCNIVIGGDYITTESGTGIVHTAPGHGMDDFNVGKKYHLPITCIVDEKGNLNNHAEKFCGLNVLKDANDLIIEDLKKNNLLLLKEKYKHRYPYDWRTKKPTIFRATEQWFASVEGFRSSALKAIEDVEWMPKTGKKRIYSMVVGRGDWCISRQRSWGVPIPVFYEKKGKEILLNSETINHIQKLFNEHGADIWWDWDEKDLLPKQYKEESDRWIKGLDTMDVWFDSGSSWAAVCEQREELAYPADLYLEGSDQHRGWFQSSLLTSVAVNNKPPYKKVLTHGFALDENGRKMSKSLGNVVDPNIIINGGSNQKIQPAYGADVLRLWVSSVDYSVDVPIGSNILKQLSDVYRKVRNTARYLLGNIHDYDPIDEEIDIDQLPILDQWMLNRLVDVSDQITIAYENYEFSKFFQILQSFCVVDLSNFYLDIAKDRLYVSAKSSIRRRTCQFVMSKIVENLAVLISPVLCHMAEDIWQNIPYSTNEKSVFERGWPNLPKSWINPELNERISNLRKLRVEINKAIEGCRTQQIIGAALETEVNYLPENEIIKNSLSWLEKFGNKEVDLYSDWLIVSKFNVVNNLFEDYLIIDDNELGKIQILKAKGQKCDRCWHYQSNTVMGIEDTKLCKRCANIITS.

The 'HIGH' region motif lies at 68 to 78 (PYANGSLHMGH). Glutamate 582 is an L-isoleucyl-5'-AMP binding site. Residues 623–627 (KMSKS) carry the 'KMSKS' region motif. Lysine 626 provides a ligand contact to ATP. Residues cysteine 936, cysteine 939, cysteine 956, and cysteine 959 each coordinate Zn(2+).

Belongs to the class-I aminoacyl-tRNA synthetase family. IleS type 1 subfamily. As to quaternary structure, monomer. Zn(2+) is required as a cofactor.

It localises to the cytoplasm. The enzyme catalyses tRNA(Ile) + L-isoleucine + ATP = L-isoleucyl-tRNA(Ile) + AMP + diphosphate. Catalyzes the attachment of isoleucine to tRNA(Ile). As IleRS can inadvertently accommodate and process structurally similar amino acids such as valine, to avoid such errors it has two additional distinct tRNA(Ile)-dependent editing activities. One activity is designated as 'pretransfer' editing and involves the hydrolysis of activated Val-AMP. The other activity is designated 'posttransfer' editing and involves deacylation of mischarged Val-tRNA(Ile). This Prochlorococcus marinus (strain MIT 9515) protein is Isoleucine--tRNA ligase.